The sequence spans 463 residues: Glucagon-like peptide 1 receptor (463 aa).

Positions 1 to 21 (MASTPSLLRLALLLLGAVGRA) are cleaved as a signal peptide. Residues 22-139 (GPRPQGTTVS…KRGERNFPEE (118 aa)) lie on the Extracellular side of the membrane. 3 cysteine pairs are disulfide-bonded: C46/C71, C62/C104, and C85/C126. N-linked (GlcNAc...) asparagine glycosylation is found at N63, N82, and N115. Residues 140–164 (QLLSLYIIYTVGYALSFSALVIASA) traverse the membrane as a helical segment. The Cytoplasmic segment spans residues 165–175 (ILVGFRHLHCT). Residues 176–201 (RNYIHLNLFASFILRALSVFIKDAAL) form a helical membrane-spanning segment. The Extracellular portion of the chain corresponds to 202-227 (KWMYSTAAQQHQWDGLLSYQDSLGCR). Residues C226 and C296 are joined by a disulfide bond. Residues 228 to 251 (LVFLLMQYCVAANYYWLLVEGVYL) traverse the membrane as a helical segment. Residues 252 to 265 (YTLLAFSVFSEQRI) are Cytoplasmic-facing. The chain crosses the membrane as a helical span at residues 266-290 (FKLYLSIGWGVPLLFVIPWGIVKYL). Residues 291–305 (YEDEGCWTRNSNMNY) lie on the Extracellular side of the membrane. The chain crosses the membrane as a helical span at residues 306-328 (WLIIRLPILFAIGVNFLIFIRVI). Residues 329 to 348 (CIVVSKLKANLMCKTDIKCR) are Cytoplasmic-facing. An ADP-ribosylcysteine modification is found at C341. At R348 the chain carries ADP-ribosylarginine. The chain crosses the membrane as a helical span at residues 349-370 (LAKSTLTLIPLLGTHEVIFAFV). Residues 352 to 355 (STLT) are important for allosteric inhibitor binding. At 371-383 (MDEHARGTLRFIK) the chain is on the extracellular side. The helical transmembrane segment at 384–404 (LFTELSFTSFQGLMVAILYCF) threads the bilayer. Over 405–463 (VNNEVQMEFRKCWERWRLEHLNIQRDCSMKPLKCPTSSVSSGATVGSSVYAATCQSSYS) the chain is Cytoplasmic.

It belongs to the G-protein coupled receptor 2 family. In terms of assembly, may form homodimers and heterodimers with GIPR. Post-translationally, N-glycosylation enhances cell surface expression and lengthens receptor half-life by preventing degradation in the ER. In terms of tissue distribution, detected in pancreatic islets (at protein level). Detected in pancreatic islets and lungs.

The protein localises to the cell membrane. G-protein coupled receptor for glucagon-like peptide 1 (GLP-1). Ligand binding triggers activation of a signaling cascade that leads to the activation of adenylyl cyclase and increased intracellular cAMP levels. Plays a role in regulating insulin secretion in response to GLP-1. The polypeptide is Glucagon-like peptide 1 receptor (Glp1r) (Mus musculus (Mouse)).